The primary structure comprises 58 residues: Small ribosomal subunit protein bS21 (58 aa).

The protein belongs to the bacterial ribosomal protein bS21 family.

The polypeptide is Small ribosomal subunit protein bS21 (Lacticaseibacillus paracasei (strain ATCC 334 / BCRC 17002 / CCUG 31169 / CIP 107868 / KCTC 3260 / NRRL B-441) (Lactobacillus paracasei)).